A 337-amino-acid chain; its full sequence is Ribosomal RNA small subunit methyltransferase C (337 aa).

This sequence belongs to the methyltransferase superfamily. RsmC family. As to quaternary structure, monomer.

It localises to the cytoplasm. It carries out the reaction guanosine(1207) in 16S rRNA + S-adenosyl-L-methionine = N(2)-methylguanosine(1207) in 16S rRNA + S-adenosyl-L-homocysteine + H(+). In terms of biological role, specifically methylates the guanine in position 1207 of 16S rRNA in the 30S particle. In Acinetobacter baumannii (strain ATCC 17978 / DSM 105126 / CIP 53.77 / LMG 1025 / NCDC KC755 / 5377), this protein is Ribosomal RNA small subunit methyltransferase C.